The primary structure comprises 268 residues: Undecaprenyl-diphosphatase (268 aa).

The next 7 helical transmembrane spans lie at 5 to 25 (SIISALVLGLIEGLTEFIPVS), 43 to 63 (GNTFAVLIQLGAILAILLVYF), 84 to 104 (FSVLLAFLPAALIGAAAHGFI), 107 to 127 (VLFETPMLICVVLIVGGIILY), 184 to 204 (AAEFSFFLAMPTMVGAFALDL), 213 to 233 (FDDVGLIAAGFIAAFIAGIFV), and 248 to 268 (PFAIWRILVGTAGLVGLWLLG).

It belongs to the UppP family.

The protein localises to the cell inner membrane. The catalysed reaction is di-trans,octa-cis-undecaprenyl diphosphate + H2O = di-trans,octa-cis-undecaprenyl phosphate + phosphate + H(+). In terms of biological role, catalyzes the dephosphorylation of undecaprenyl diphosphate (UPP). Confers resistance to bacitracin. In Rhizobium meliloti (strain 1021) (Ensifer meliloti), this protein is Undecaprenyl-diphosphatase.